Here is a 735-residue protein sequence, read N- to C-terminus: Phosphoribosylformylglycinamidine synthase subunit PurL (735 aa).

His-50 is a catalytic residue. Residues Tyr-53 and Lys-92 each contribute to the ATP site. Glu-94 serves as a coordination point for Mg(2+). Residues 95-98 (SHNH) and Arg-117 contribute to the substrate site. His-96 serves as the catalytic Proton acceptor. Asp-118 serves as a coordination point for Mg(2+). Gln-241 contributes to the substrate binding site. A Mg(2+)-binding site is contributed by Asp-269. 313-315 (ESQ) lines the substrate pocket. Positions 495 and 532 each coordinate ATP. Asn-533 lines the Mg(2+) pocket. Ser-535 is a binding site for substrate.

The protein belongs to the FGAMS family. As to quaternary structure, monomer. Part of the FGAM synthase complex composed of 1 PurL, 1 PurQ and 2 PurS subunits.

It is found in the cytoplasm. The catalysed reaction is N(2)-formyl-N(1)-(5-phospho-beta-D-ribosyl)glycinamide + L-glutamine + ATP + H2O = 2-formamido-N(1)-(5-O-phospho-beta-D-ribosyl)acetamidine + L-glutamate + ADP + phosphate + H(+). Its pathway is purine metabolism; IMP biosynthesis via de novo pathway; 5-amino-1-(5-phospho-D-ribosyl)imidazole from N(2)-formyl-N(1)-(5-phospho-D-ribosyl)glycinamide: step 1/2. Part of the phosphoribosylformylglycinamidine synthase complex involved in the purines biosynthetic pathway. Catalyzes the ATP-dependent conversion of formylglycinamide ribonucleotide (FGAR) and glutamine to yield formylglycinamidine ribonucleotide (FGAM) and glutamate. The FGAM synthase complex is composed of three subunits. PurQ produces an ammonia molecule by converting glutamine to glutamate. PurL transfers the ammonia molecule to FGAR to form FGAM in an ATP-dependent manner. PurS interacts with PurQ and PurL and is thought to assist in the transfer of the ammonia molecule from PurQ to PurL. The sequence is that of Phosphoribosylformylglycinamidine synthase subunit PurL from Bartonella henselae (strain ATCC 49882 / DSM 28221 / CCUG 30454 / Houston 1) (Rochalimaea henselae).